A 327-amino-acid chain; its full sequence is Gonadotropin-releasing hormone receptor (327 aa).

Residues 1–38 lie on the Extracellular side of the membrane; sequence MANNASLEQDQNHCSAINNSIPLTQGKLPTLTLSGKIR. N-linked (GlcNAc...) asparagine glycosylation is found at N4 and N18. A helical transmembrane segment spans residues 39-58; sequence VTVTFFLFLLSTAFNASFLV. Over 59-77 the chain is Cytoplasmic; sequence KLQRWTQKRKKGKKLSRMK. Residues 78 to 97 form a helical membrane-spanning segment; the sequence is VLLKHLTLANLLETLIVMPL. Topologically, residues 98-115 are extracellular; it reads DGMWNITVQWYAGEFLCK. The N-linked (GlcNAc...) asparagine glycan is linked to N102. A disulfide bridge connects residues C114 and C195. The chain crosses the membrane as a helical span at residues 116–137; that stretch reads VLSYLKLFSMYAPAFMMVVISL. Residues 138–164 lie on the Cytoplasmic side of the membrane; the sequence is DRSLAVTQPLAVQSKSKLERSMTSLAW. The chain crosses the membrane as a helical span at residues 165 to 184; the sequence is ILSIVFAGPQLYIFRMIYLA. Over 185-211 the chain is Extracellular; it reads DGSGPAVFSQCVTHCSFPQWWHEAFYN. The helical transmembrane segment at 212–231 threads the bilayer; sequence FFTFSCLFIIPLLIMLICNA. Residues 232–280 lie on the Cytoplasmic side of the membrane; the sequence is KIIFALTRVLHQDPRKLQLNQSKNNIPRARLRTLKMTVAFGTSFVICWT. A helical membrane pass occupies residues 281 to 299; sequence PYYVLGIWYWFDPEMLNRV. The Extracellular segment spans residues 300–305; sequence SEPVNH. The chain crosses the membrane as a helical span at residues 306–325; it reads FFFLFAFLNPCFDPLIYGYF. Topologically, residues 326–327 are cytoplasmic; sequence SL.

The protein belongs to the G-protein coupled receptor 1 family.

The protein resides in the cell membrane. In terms of biological role, receptor for gonadotropin releasing hormone (GnRH) that mediates the action of GnRH to stimulate the secretion of the gonadotropic hormones luteinizing hormone (LH) and follicle-stimulating hormone (FSH). This receptor mediates its action by association with G-proteins that activate a phosphatidylinositol-calcium second messenger system. This is Gonadotropin-releasing hormone receptor (Gnrhr) from Rattus norvegicus (Rat).